Reading from the N-terminus, the 115-residue chain is Ribonuclease P protein component (115 aa).

It belongs to the RnpA family. As to quaternary structure, consists of a catalytic RNA component (M1 or rnpB) and a protein subunit.

The enzyme catalyses Endonucleolytic cleavage of RNA, removing 5'-extranucleotides from tRNA precursor.. In terms of biological role, RNaseP catalyzes the removal of the 5'-leader sequence from pre-tRNA to produce the mature 5'-terminus. It can also cleave other RNA substrates such as 4.5S RNA. The protein component plays an auxiliary but essential role in vivo by binding to the 5'-leader sequence and broadening the substrate specificity of the ribozyme. This Bacillus cereus (strain AH187) protein is Ribonuclease P protein component.